Reading from the N-terminus, the 547-residue chain is Solute carrier family 22 member 7 (547 aa).

12 helical membrane-spanning segments follow: residues 21–41, 145–165, 173–193, 203–223, 233–253, 258–278, 345–365, 374–396, 403–423, 431–451, 465–485, and 492–512; these read VALLALPRVLLPMHFLLPIFL, ATSTFFFAGVLVGAVAFGYLS, LLLVAYVSALVLGLVSAASVS, LTGTALAGFTIIVMPLELEWL, VLSSTFWTGGVMLLALVGYLI, WLLLAVTLPCAPGILSLWWVP, ISLCCMVVWFGVNFSYYGLSL, VYQTQLLFGAVELPSKLLVYLSV, LTLAGTLLGTSLSLGFRLLVS, TALAVLGKGFSEAAFTTAYLF, MGLTALVGRLGGSLAPLAALL, and LPKLAYGGIALLAACTALLLP. The interval 521 to 547 is disordered; sequence ETIQDVERKSAPSSLQEEEMPMKQVQD.

This sequence belongs to the major facilitator (TC 2.A.1) superfamily. Organic cation transporter (TC 2.A.1.19) family.

It localises to the basolateral cell membrane. The protein resides in the apical cell membrane. Its subcellular location is the cell membrane. The catalysed reaction is orotate(out) + L-glutamate(in) = orotate(in) + L-glutamate(out). It catalyses the reaction 3',5'-cyclic GMP(in) = 3',5'-cyclic GMP(out). The enzyme catalyses GMP(in) = GMP(out). It carries out the reaction 2'-deoxyguanosine(in) = 2'-deoxyguanosine(out). The catalysed reaction is GDP(in) = GDP(out). It catalyses the reaction guanosine(in) = guanosine(out). The enzyme catalyses GTP(in) = GTP(out). It carries out the reaction 3',5'-cyclic AMP(in) = 3',5'-cyclic AMP(out). The catalysed reaction is creatinine(in) = creatinine(out). It catalyses the reaction prostaglandin E2(out) = prostaglandin E2(in). The enzyme catalyses 2-oxoglutarate(in) = 2-oxoglutarate(out). It carries out the reaction glutarate(in) = glutarate(out). The catalysed reaction is urate(out) = urate(in). It catalyses the reaction estrone 3-sulfate(out) = estrone 3-sulfate(in). In terms of biological role, functions as a Na(+)-independent bidirectional multispecific transporter. Contributes to the renal and hepatic elimination of endogenous organic compounds from the systemic circulation into the urine and bile, respectively. Capable of transporting a wide range of purine and pyrimidine nucleobases, nucleosides and nucleotides, with cGMP, 2'deoxyguanosine and GMP being the preferred substrates. Functions as a pH- and chloride-independent cGMP bidirectional facilitative transporter that can regulate both intracellular and extracellular levels of cGMP and may be involved in cGMP signaling pathways. Mediates orotate/glutamate bidirectional exchange and most likely display a physiological role in hepatic release of glutamate into the blood. Involved in renal secretion and possible reabsorption of creatinine. Able to uptake prostaglandin E2 (PGE2) and may contribute to PGE2 renal excretion. Also transports alpha-ketoglutarate and urate. Apart from the orotate/glutamate exchange, the counterions for the uptake of other SLC22A7/OAT2 substrates remain to be identified. The polypeptide is Solute carrier family 22 member 7 (SLC22A7) (Sus scrofa (Pig)).